The primary structure comprises 111 residues: C-X-C motif chemokine 14 (111 aa).

Residues 1 to 34 (MSLLPRRAPPVSMRLLAAALLLLLLALYTARVDG) form the signal peptide. Disulfide bonds link cysteine 37–cysteine 63 and cysteine 39–cysteine 84. The short motif at 67–81 (MVIITTKSVSRYRGQ) is the D-box element.

Belongs to the intercrine alpha (chemokine CxC) family. Post-translationally, ubiquitinated, followed by degradation by the proteasome. As to expression, expressed in heart, brain, placenta, lung, liver, skeletal muscle, kidney and pancreas. Highly expressed in normal tissue without inflammatory stimuli and infrequently expressed in cancer cell lines. Weakly expressed in monocyte-derived dendritic cells. Not detected in lung or unstimulated peripheral blood lymphocytes.

The protein localises to the secreted. In terms of biological role, potent chemoattractant for neutrophils, and weaker for dendritic cells. Not chemotactic for T-cells, B-cells, monocytes, natural killer cells or granulocytes. Does not inhibit proliferation of myeloid progenitors in colony formation assays. This chain is C-X-C motif chemokine 14 (CXCL14), found in Homo sapiens (Human).